Reading from the N-terminus, the 396-residue chain is Putative glycosyltransferase HOC1 (396 aa).

The Cytoplasmic portion of the chain corresponds to Ala-2–Arg-13. Residues Leu-14–His-34 form a helical; Signal-anchor for type II membrane protein membrane-spanning segment. Topologically, residues Asn-35–Lys-396 are lumenal. Asn-37 carries an N-linked (GlcNAc...) asparagine glycan.

This sequence belongs to the glycosyltransferase 32 family. In terms of assembly, component of the M-Pol II complex composed of ANP1, MNN9, MNN10, MNN11 and HOC1.

The protein localises to the golgi apparatus. The protein resides in the cis-Golgi network membrane. Its function is as follows. The M-Pol II complex possesses alpha-1,6-mannosyltransferase activity and is probably involved in the elongation of the mannan backbone of N-linked glycans on cell wall and periplasmic proteins. The chain is Putative glycosyltransferase HOC1 (HOC1) from Saccharomyces cerevisiae (strain ATCC 204508 / S288c) (Baker's yeast).